We begin with the raw amino-acid sequence, 411 residues long: LL-diaminopimelate aminotransferase (411 aa).

Residues Y16 and G43 each contribute to the substrate site. Pyridoxal 5'-phosphate contacts are provided by residues Y73, 109 to 110 (AK), Y133, N188, Y219, and 247 to 249 (SFS). K110, Y133, and N188 together coordinate substrate. The residue at position 250 (K250) is an N6-(pyridoxal phosphate)lysine. Residues R258 and N293 each coordinate pyridoxal 5'-phosphate. Substrate-binding residues include N293 and R389.

This sequence belongs to the class-I pyridoxal-phosphate-dependent aminotransferase family. LL-diaminopimelate aminotransferase subfamily. Homodimer. Pyridoxal 5'-phosphate serves as cofactor.

It catalyses the reaction (2S,6S)-2,6-diaminopimelate + 2-oxoglutarate = (S)-2,3,4,5-tetrahydrodipicolinate + L-glutamate + H2O + H(+). The protein operates within amino-acid biosynthesis; L-lysine biosynthesis via DAP pathway; LL-2,6-diaminopimelate from (S)-tetrahydrodipicolinate (aminotransferase route): step 1/1. Functionally, involved in the synthesis of meso-diaminopimelate (m-DAP or DL-DAP), required for both lysine and peptidoglycan biosynthesis. Catalyzes the direct conversion of tetrahydrodipicolinate to LL-diaminopimelate. The protein is LL-diaminopimelate aminotransferase of Methanobrevibacter smithii (strain ATCC 35061 / DSM 861 / OCM 144 / PS).